A 132-amino-acid chain; its full sequence is Riboflavin kinase (132 aa).

G13 to S18 is a binding site for CDP. Residues T40 and N42 each coordinate Mg(2+). Residues T98 and E106 each contribute to the FMN site. Residue V111–R114 coordinates CDP.

Belongs to the archaeal riboflavin kinase family. It depends on Mg(2+) as a cofactor.

The enzyme catalyses riboflavin + CTP = CDP + FMN + H(+). The protein operates within cofactor biosynthesis; FMN biosynthesis; FMN from riboflavin (CTP route): step 1/1. Its function is as follows. Catalyzes the CTP-dependent phosphorylation of riboflavin (vitamin B2) to form flavin mononucleotide (FMN). The sequence is that of Riboflavin kinase from Aeropyrum pernix (strain ATCC 700893 / DSM 11879 / JCM 9820 / NBRC 100138 / K1).